Here is a 192-residue protein sequence, read N- to C-terminus: Ion-translocating oxidoreductase complex subunit A (192 aa).

6 consecutive transmembrane segments (helical) span residues 5–25, 39–59, 65–85, 102–122, 134–154, and 171–191; these read LLLL…FLGL, IGMS…SYLV, LPFD…AVVV, ALGI…VALL, AIYG…FSAM, and AIAM…TGLV.

The protein belongs to the NqrDE/RnfAE family. The complex is composed of six subunits: RnfA, RnfB, RnfC, RnfD, RnfE and RnfG.

It is found in the cell inner membrane. Its function is as follows. Part of a membrane-bound complex that couples electron transfer with translocation of ions across the membrane. The sequence is that of Ion-translocating oxidoreductase complex subunit A from Shewanella sp. (strain MR-4).